A 289-amino-acid polypeptide reads, in one-letter code: Survival motor neuron protein (289 aa).

Residues 1–10 (MAMGSGGGAG) are compositionally biased toward gly residues. The disordered stretch occupies residues 1 to 27 (MAMGSGGGAGSEQEDTVLFRRGTGQSD). Residues 11–42 (SEQEDTVLFRRGTGQSDDSDIWDDTALIKAYD) form a P1 (binding site for GEMIN2) region. At threonine 23 the chain carries Phosphothreonine. 2 positions are modified to phosphoserine: serine 26 and serine 29. Lysine 49 participates in a covalent cross-link: Glycyl lysine isopeptide (Lys-Gly) (interchain with G-Cter in SUMO2). The disordered stretch occupies residues 55 to 88 (GDMCETSDKPKGTARRKPAKKNKNQKKNATAPLK). A compositionally biased stretch (basic residues) spans 66 to 80 (GTARRKPAKKNKNQK). Phosphothreonine is present on threonine 67. One can recognise a Tudor domain in the interval 89-149 (QWKAGDKCSA…LSPTCEVANN (61 aa)). A required for interaction with RPP20/POP7 region spans residues 95–205 (KCSAVWSEDG…VPGAGLGPGK (111 aa)). The tract at residues 150-226 (TEQNTQENES…PPPPPPFLPC (77 aa)) is disordered. Over residues 171-181 (RSLRSKAHSKS) the composition is skewed to basic residues. Lysine 205 participates in a covalent cross-link: Glycyl lysine isopeptide (Lys-Gly) (interchain with G-Cter in SUMO2). The segment covering 212–226 (GPPPPPPPPPPFLPC) has biased composition (pro residues). The P2 (binding site for SM B) stretch occupies residues 235–262 (PPIIPPPPPISPDCLDDTDALGSMLISW). The tract at residues 274-289 (GFRQNKKEGKKCSHTN) is required for interaction with SYNCRIP.

It belongs to the SMN family. As to quaternary structure, homooligomer; may form higher order homooligomers in the dimer to octamer range. Part of the core SMN complex that contains SMN1, GEMIN2/SIP1, DDX20/GEMIN3, GEMIN4, GEMIN5, GEMIN6, GEMIN7, GEMIN8 and STRAP/UNRIP. Part of the SMN-Sm complex that contains SMN1, GEMIN2/SIP1, DDX20/GEMIN3, GEMIN4, GEMIN5, GEMIN6, GEMIN7, GEMIN8, STRAP/UNRIP and the Sm proteins SNRPB, SNRPD1, SNRPD2, SNRPD3, SNRPE, SNRPF and SNRPG. Component of an import snRNP complex composed of KPNB1, RNUT1, SMN1 and ZNF259. Interacts with DDX20, FBL, NOLA1, RNUT1 and with several spliceosomal snRNP core Sm proteins, including SNRPB, SNRPD1, SNRPD2, SNRPD3, SNRPE and ILF3. Interacts with GEMIN2; the interaction is direct. Interacts with GEMIN3; the interaction is direct. Interacts with GEMIN8; the interaction is direct. Interacts with SNRPB; the interaction is direct. Interacts (via Tudor domain) with SNRPD1 (via C-terminus); the interaction is direct. Interacts with SNRPD2; the interaction is direct. Interacts (via Tudor domain) with SNRPD3 (via C-terminus); the interaction is direct. Interacts with SNRPE; the interaction is direct. Interacts with OSTF1, LSM10, LSM11 and RPP20/POP7. Interacts (via C-terminal region) with ZPR1 (via C-terminal region). Interacts (via Tudor domain) with COIL. Interacts with SETX; recruits SETX to POLR2A. Interacts with POLR2A (via the C-terminal domain (CTD)). Interacts with PRMT5. Interacts with XRN2. Interacts (via C-terminus) with FMR1 (via C-terminus); the interaction is direct and occurs in a RNA-independent manner. Interacts with SYNCRIP. Interacts (via Tudor domain) with SF3B2 (methylated form). Interacts with WRAP53/TCAB1. Interacts (via Tudor domain) with ELAVL4 in an RNA-independent manner; the interaction is required for localization of ELAVL4 to RNA granules. Interacts with FRG1.

It localises to the nucleus. It is found in the gem. Its subcellular location is the cajal body. The protein localises to the cytoplasm. The protein resides in the cytoplasmic granule. It localises to the perikaryon. It is found in the cell projection. Its subcellular location is the neuron projection. The protein localises to the axon. The protein resides in the myofibril. It localises to the sarcomere. It is found in the z line. Functionally, the SMN complex catalyzes the assembly of small nuclear ribonucleoproteins (snRNPs), the building blocks of the spliceosome, and thereby plays an important role in the splicing of cellular pre-mRNAs. Most spliceosomal snRNPs contain a common set of Sm proteins SNRPB, SNRPD1, SNRPD2, SNRPD3, SNRPE, SNRPF and SNRPG that assemble in a heptameric protein ring on the Sm site of the small nuclear RNA to form the core snRNP (Sm core). In the cytosol, the Sm proteins SNRPD1, SNRPD2, SNRPE, SNRPF and SNRPG are trapped in an inactive 6S pICln-Sm complex by the chaperone CLNS1A that controls the assembly of the core snRNP. To assemble core snRNPs, the SMN complex accepts the trapped 5Sm proteins from CLNS1A forming an intermediate. Binding of snRNA inside 5Sm ultimately triggers eviction of the SMN complex, thereby allowing binding of SNRPD3 and SNRPB to complete assembly of the core snRNP. Within the SMN complex, SMN1 acts as a structural backbone and together with GEMIN2 it gathers the Sm complex subunits. Ensures the correct splicing of U12 intron-containing genes that may be important for normal motor and proprioceptive neurons development. Also required for resolving RNA-DNA hybrids created by RNA polymerase II, that form R-loop in transcription terminal regions, an important step in proper transcription termination. May also play a role in the metabolism of small nucleolar ribonucleoprotein (snoRNPs). In Rattus norvegicus (Rat), this protein is Survival motor neuron protein (Smn1).